The sequence spans 562 residues: NAD-dependent malic enzyme (562 aa).

Tyr-101 serves as the catalytic Proton donor. Arg-154 contacts NAD(+). Lys-172 serves as the catalytic Proton acceptor. Glu-243, Asp-244, and Asp-267 together coordinate a divalent metal cation. NAD(+) contacts are provided by Asp-267 and Asn-415.

This sequence belongs to the malic enzymes family. Homotetramer. Mg(2+) serves as cofactor. Requires Mn(2+) as cofactor.

The enzyme catalyses (S)-malate + NAD(+) = pyruvate + CO2 + NADH. It catalyses the reaction oxaloacetate + H(+) = pyruvate + CO2. In Shewanella baltica (strain OS223), this protein is NAD-dependent malic enzyme.